The primary structure comprises 116 residues: Small ribosomal subunit protein uS13m (116 aa).

It belongs to the universal ribosomal protein uS13 family. Part of the small ribosomal subunit.

It localises to the mitochondrion. In terms of biological role, located at the top of the head of the small subunit, it contacts several helices of the 18S rRNA. This chain is Small ribosomal subunit protein uS13m (RPS13), found in Daucus carota (Wild carrot).